Here is a 141-residue protein sequence, read N- to C-terminus: IRLLHSLTPPPPPPPPPPPPPPPPPPPPPPPPPPPPPPPPPPPPPPPPPPPPPPPPPPRRARIHHNIPLFLRFFKKSYSSHFHWRCGQRNHCHSFVCKRLLVAYPVRHFLSAACQFLPWLSINSFSGTEMLNNRFHGLITL.

The interval 1 to 61 is disordered; sequence IRLLHSLTPP…PPPPPPPRRA (61 aa). The span at 8–58 shows a compositional bias: pro residues; it reads TPPPPPPPPPPPPPPPPPPPPPPPPPPPPPPPPPPPPPPPPPPPPPPPPPP. A DNA-binding region (H-T-H motif) is located at residues 98-116; the sequence is KRLLVAYPVRHFLSAACQF.

This is an uncharacterized protein from Owenia fusiformis (Polychaete worm).